Reading from the N-terminus, the 35-residue chain is Apolipophorin-3 (35 aa).

Equilibrium between a soluble monomer and a bound lipoprotein form. Apolipophorin-3 associates with lipophorin during lipid loading until each particle contains 9 or 14 molecules of apolipophorin-3. As to expression, hemolymph.

The protein resides in the secreted. Assists in the loading of diacylglycerol, generated from triacylglycerol stores in the fat body through the action of adipokinetic hormone, into lipophorin, the hemolymph lipoprotein. It increases the lipid carrying capacity of lipophorin by covering the expanding hydrophobic surface resulting from diacylglycerol uptake. It thus plays a critical role in the transport of lipids during flight in several species of insects. Has hemagglutinating activity towards rabbit erythrocytes. The protein is Apolipophorin-3 of Heliothis virescens (Tobacco budworm moth).